Here is a 509-residue protein sequence, read N- to C-terminus: Transcription factor SOX-9 (509 aa).

2 disordered regions span residues 1–67 and 160–273; these read MNLL…SEED and RLRV…FRDV. Residues 30–41 are compositionally biased toward low complexity; sequence SAGSPCPSGSGS. Residues 42–52 show a composition bias toward polar residues; it reads DTENTRPQENT. 2 stretches are compositionally biased toward basic and acidic residues: residues 56 to 67 and 160 to 174; these read GEPDLKKESEED and RLRVQHKKDHPDYKY. Positions 63 to 103 are dimerization (DIM); the sequence is ESEEDKFPVCIREAVSQVLKGYDWTLVPMPVRVNGSSKNKP. Positions 63–103 are PQA; it reads ESEEDKFPVCIREAVSQVLKGYDWTLVPMPVRVNGSSKNKP. The residue at position 64 (serine 64) is a Phosphoserine. Positions 105 to 173 form a DNA-binding region, HMG box; it reads VKRPMNAFMV…QHKKDHPDYK (69 aa). Serine 211 is subject to Phosphoserine. A transactivation domain (TAM) region spans residues 224-307; the sequence is PGEHSGQSQG…LPPNGHPGVP (84 aa). 2 consecutive short sequence motifs (9aaTAD) follow at residues 275–284 and 290–298; these read IGELSSDVIS and DVNEFDQYL. Residues 330-415 form a disordered region; the sequence is SAGHVWMSKQ…HYSEQQQHSP (86 aa). Over residues 341–376 the composition is skewed to pro residues; sequence APPPPPQQPPQAPPAPQAPPQPQAAPPQQPAAPPQQ. A compositionally biased stretch (polar residues) spans 380-415; the sequence is HTLTTLSSEPGQSQRTHIKTEQLSPSHYSEQQQHSP. The segment at 394-509 is transactivation domain (TAC); it reads RTHIKTEQLS…QPVYTQLTRP (116 aa). A Glycyl lysine isopeptide (Lys-Gly) (interchain with G-Cter in ubiquitin) cross-link involves residue lysine 398. The 9aaTAD 3 motif lies at 460-468; that stretch reads TGLYSTFTY. The interval 479–509 is disordered; the sequence is PIADTSGVPSIPQTHSPQHWEQPVYTQLTRP. The segment covering 485–509 has biased composition (polar residues); sequence GVPSIPQTHSPQHWEQPVYTQLTRP.

As to quaternary structure, homodimer; homodimerization is required for activity. Interacts (via C-terminus) with ZNF219; forming a complex that binds to the COL2A1 promoter and activates COL2A1 expression. Interacts with DDRGK1. Interacts with EP300/p300. Interacts with beta-catenin (CTNNB1); inhibiting CTNNB1 activity by competing with the binding sites of TCF/LEF within CTNNB1. Acetylated; acetylation impairs nuclear localization and ability to transactivate expression of target genes. Deacetylated by SIRT1. Post-translationally, phosphorylation at Ser-64 and Ser-211 by PKA increases transcriptional activity and may help delay chondrocyte maturation downstream of PTHLH/PTHrP signaling. Phosphorylation at either Ser-64 or Ser-211 is required for sumoylation, but phosphorylation is not dependent on sumoylation. Phosphorylated on tyrosine residues; tyrosine dephosphorylation by PTPN11/SHP2 blocks SOX9 phosphorylation by PKA and subsequent SUMOylation. In terms of processing, ubiquitinated; ubiquitination leads to proteasomal degradation and is negatively regulated by DDRGK1. Sumoylated; phosphorylation at either Ser-64 or Ser-211 is required for sumoylation. Sumoylation is induced by BMP signaling pathway.

The protein resides in the nucleus. Functionally, transcription factor that plays a key role in chondrocytes differentiation and skeletal development. Specifically binds the 5'-ACAAAG-3' DNA motif present in enhancers and super-enhancers and promotes expression of genes important for chondrogenesis, including cartilage matrix protein-coding genes COL2A1, COL4A2, COL9A1, COL11A2 and ACAN, SOX5 and SOX6. Also binds to some promoter regions. Plays a central role in successive steps of chondrocyte differentiation. Absolutely required for precartilaginous condensation, the first step in chondrogenesis during which skeletal progenitors differentiate into prechondrocytes. Together with SOX5 and SOX6, required for overt chondrogenesis when condensed prechondrocytes differentiate into early stage chondrocytes, the second step in chondrogenesis. Later, required to direct hypertrophic maturation and block osteoblast differentiation of growth plate chondrocytes: maintains chondrocyte columnar proliferation, delays prehypertrophy and then prevents osteoblastic differentiation of chondrocytes by lowering beta-catenin (CTNNB1) signaling and RUNX2 expression. Also required for chondrocyte hypertrophy, both indirectly, by keeping the lineage fate of chondrocytes, and directly, by remaining present in upper hypertrophic cells and transactivating COL10A1 along with MEF2C. Low lipid levels are the main nutritional determinant for chondrogenic commitment of skeletal progenitor cells: when lipids levels are low, FOXO (FOXO1 and FOXO3) transcription factors promote expression of SOX9, which induces chondrogenic commitment and suppresses fatty acid oxidation. Mechanistically, helps, but is not required, to remove epigenetic signatures of transcriptional repression and deposit active promoter and enhancer marks at chondrocyte-specific genes. Acts in cooperation with the Hedgehog pathway-dependent GLI (GLI1 and GLI3) transcription factors. In addition to cartilage development, also acts as a regulator of proliferation and differentiation in epithelial stem/progenitor cells: involved in the lung epithelium during branching morphogenesis, by balancing proliferation and differentiation and regulating the extracellular matrix. Controls epithelial branching during kidney development. In Homo sapiens (Human), this protein is Transcription factor SOX-9.